The sequence spans 235 residues: Ribosome maturation factor RimM (235 aa).

Over residues 1-19 (MKHEEANKEIGGRGAEGQR) the composition is skewed to basic and acidic residues. The tract at residues 1 to 49 (MKHEEANKEIGGRGAEGQRSKRVGGNSKIQNIQSPAPNPQPIVPNTQSP) is disordered. Residues 150–230 (EDEYHVLDLI…RIEITPPPGL (81 aa)) form the PRC barrel domain.

The protein belongs to the RimM family. Binds ribosomal protein uS19.

Its subcellular location is the cytoplasm. Its function is as follows. An accessory protein needed during the final step in the assembly of 30S ribosomal subunit, possibly for assembly of the head region. Essential for efficient processing of 16S rRNA. May be needed both before and after RbfA during the maturation of 16S rRNA. It has affinity for free ribosomal 30S subunits but not for 70S ribosomes. This Nostoc punctiforme (strain ATCC 29133 / PCC 73102) protein is Ribosome maturation factor RimM.